A 359-amino-acid polypeptide reads, in one-letter code: Hereditary hemochromatosis protein homolog (359 aa).

Positions 1–24 (MSLSAGLPVRPLLLLLLLLWSVAP) are cleaved as a signal peptide. The alpha-1 stretch occupies residues 25 to 126 (QALPPRSHSL…KVTKLGVVSE (102 aa)). The Extracellular segment spans residues 25–318 (QALPPRSHSL…WEPLQSQAMI (294 aa)). Residues Asn114, Asn142, Asn166, and Asn246 are each glycosylated (N-linked (GlcNAc...) asparagine). Residues 127–217 (SHILQVVLGC…ELGRGVLGQQ (91 aa)) are alpha-2. Disulfide bonds link Cys136-Cys199 and Cys237-Cys294. Positions 218 to 309 (VPTLVKVTRH…GLDQPLTASW (92 aa)) are alpha-3. Positions 219 to 308 (PTLVKVTRHW…PGLDQPLTAS (90 aa)) constitute an Ig-like C1-type domain. A connecting peptide region spans residues 310-318 (EPLQSQAMI). The chain crosses the membrane as a helical span at residues 319–339 (IGIISGVTVCAIFLVGILFLI). At 340 to 359 (LRKRKASGGTMGGYVLTDCE) the chain is on the cytoplasmic side.

Belongs to the MHC class I family. As to quaternary structure, binds TFR through the extracellular domain in a pH-dependent manner.

The protein resides in the cell membrane. Binds to transferrin receptor (TFR) and reduces its affinity for iron-loaded transferrin. This chain is Hereditary hemochromatosis protein homolog (Hfe), found in Mus musculus (Mouse).